The sequence spans 353 residues: Keratocan (353 aa).

Positions 1 to 21 (MMTLKVCPSLLLLFLVHSVWT) are cleaved as a signal peptide. Residues 34-72 (EHWSHYTFECPQECFCPPSFPNALYCDNKGLKEIPAIPA) form the LRRNT domain. 2 disulfide bridges follow: Cys-43–Cys-49 and Cys-47–Cys-59. LRR repeat units lie at residues 73–94 (RIWYLYLQNNLIETISEKPFVN), 97–118 (HLRWINLNKNKITNNGIESGVL), 123–143 (RLLYLFLEDNELEEVPAPLPV), 144–165 (GLEQLRLARNKISRIPEGVFSN), 168–188 (NLTMLDLHQNNLLDSALQSDT), 194–214 (SLMQLNIAKNSLKKMPLSIPA), 215–236 (NTLQLFLDNNSIEVIPENYFSA), and 239–259 (KVTFLRLNYNKLSDEGIPPNG). Asn-94 carries N-linked (GlcNAc...) (keratan sulfate) asparagine glycosylation. Asn-168 carries N-linked (GlcNAc...) asparagine glycosylation. The N-linked (GlcNAc...) (keratan sulfate) asparagine glycan is linked to Asn-223. Residue Asn-261 is glycosylated (N-linked (GlcNAc...) (keratan sulfate) asparagine). LRR repeat units lie at residues 264-283 (SILDLQLSHNQLTKIPPINA) and 284-305 (HLEHLHLDHNRIKSVNGTQICP). Asn-299 is a glycosylation site (N-linked (GlcNAc...) asparagine). A disulfide bond links Cys-304 and Cys-344.

Belongs to the small leucine-rich proteoglycan (SLRP) family. SLRP class II subfamily. Cornea.

Its subcellular location is the secreted. The protein resides in the extracellular space. It localises to the extracellular matrix. In terms of biological role, plays an important role in generating and maintaining a transparent matrix within the corneal stroma. In Coturnix japonica (Japanese quail), this protein is Keratocan (KERA).